We begin with the raw amino-acid sequence, 408 residues long: Neutral cholesterol ester hydrolase 1 (408 aa).

Topologically, residues 1 to 4 (MRSS) are cytoplasmic. A helical; Signal-anchor for type II membrane protein membrane pass occupies residues 5–25 (CVLLAALLALVAYYVYIPLPS). Residues 26–408 (AVSDPWKLML…SYFKWLDQNL (383 aa)) are Lumenal-facing. Residues 113 to 115 (HGG) carry the Involved in the stabilization of the negatively charged intermediate by the formation of the oxyanion hole motif. Residue Ser-191 is part of the active site. N-linked (GlcNAc...) asparagine glycosylation is present at Asn-270. Asp-348 is a catalytic residue. Asn-367 is a glycosylation site (N-linked (GlcNAc...) asparagine). Residue His-378 is part of the active site. Asn-389 carries N-linked (GlcNAc...) asparagine glycosylation.

The protein belongs to the 'GDXG' lipolytic enzyme family. N-glycosylated.

Its subcellular location is the cell membrane. It is found in the microsome. It catalyses the reaction a 1-O-alkyl-2-acetyl-sn-glycerol + H2O = a 1-O-alkyl-sn-glycerol + acetate + H(+). The catalysed reaction is 1-O-hexadecyl-2-acetyl-sn-glycerol + H2O = 1-O-hexadecyl-sn-glycerol + acetate + H(+). The enzyme catalyses a cholesterol ester + H2O = cholesterol + a fatty acid + H(+). It carries out the reaction cholesteryl (9Z-octadecenoate) + H2O = cholesterol + (9Z)-octadecenoate + H(+). Its function is as follows. Hydrolyzes 2-acetyl monoalkylglycerol ether (1-O-alkyl-2-acetyl-sn-glycerol), the penultimate precursor of the pathway for de novo synthesis of platelet-activating factor. May be responsible for the hydrolysis of cholesterol esters (such as cholesteryl (9Z-octadecenoate)) in macrophages. Also involved in organ detoxification by hydrolyzing exogenous organophosphorus compounds. This Rattus norvegicus (Rat) protein is Neutral cholesterol ester hydrolase 1 (Nceh1).